We begin with the raw amino-acid sequence, 70 residues long: Flexible pilin (70 aa).

The first 24 residues, methionine 1–alanine 24, serve as a signal peptide directing secretion.

As to quaternary structure, homomer.

The protein localises to the fimbrium. In terms of biological role, fimbriae (also called pili) are polar filaments radiating from the surface of the bacterium to a length of 0.5-1.5 micrometers and numbering 100-300 per cell. They enable bacteria to colonize the epithelium of specific host organs. Flexible pili possess hemagglutinating function. The sequence is that of Flexible pilin (aerA) from Aeromonas hydrophila.